Consider the following 289-residue polypeptide: Energy-coupling factor transporter ATP-binding protein EcfA2 (289 aa).

The ABC transporter domain maps to 3–246; the sequence is IQAKKLNYTY…PEWLKNHHLN (244 aa). 40–47 serves as a coordination point for ATP; sequence GHTGSGKS.

The protein belongs to the ABC transporter superfamily. Energy-coupling factor EcfA family. Forms a stable energy-coupling factor (ECF) transporter complex composed of 2 membrane-embedded substrate-binding proteins (S component), 2 ATP-binding proteins (A component) and 2 transmembrane proteins (T component).

It localises to the cell membrane. Its function is as follows. ATP-binding (A) component of a common energy-coupling factor (ECF) ABC-transporter complex. Unlike classic ABC transporters this ECF transporter provides the energy necessary to transport a number of different substrates. In Ligilactobacillus salivarius (strain UCC118) (Lactobacillus salivarius), this protein is Energy-coupling factor transporter ATP-binding protein EcfA2.